We begin with the raw amino-acid sequence, 422 residues long: Dihydroorotase (422 aa).

2 residues coordinate Zn(2+): His-59 and His-61. Residues 61 to 63 (HFR) and Asn-93 contribute to the substrate site. The Zn(2+) site is built by Asp-150, His-177, and His-230. Residue Asn-276 coordinates substrate. Asp-303 provides a ligand contact to Zn(2+). The active site involves Asp-303. His-307 is a binding site for substrate.

This sequence belongs to the metallo-dependent hydrolases superfamily. DHOase family. Class I DHOase subfamily. The cofactor is Zn(2+).

The catalysed reaction is (S)-dihydroorotate + H2O = N-carbamoyl-L-aspartate + H(+). It functions in the pathway pyrimidine metabolism; UMP biosynthesis via de novo pathway; (S)-dihydroorotate from bicarbonate: step 3/3. Its function is as follows. Catalyzes the reversible cyclization of carbamoyl aspartate to dihydroorotate. This chain is Dihydroorotase, found in Streptococcus pyogenes serotype M3 (strain ATCC BAA-595 / MGAS315).